Here is a 206-residue protein sequence, read N- to C-terminus: Outer-membrane lipoprotein LolB (206 aa).

Positions 1–21 (MHERNYAVFRLLPLASLLLAA) are cleaved as a signal peptide. A lipid anchor (N-palmitoyl cysteine) is attached at Cys-22. The S-diacylglycerol cysteine moiety is linked to residue Cys-22.

Belongs to the LolB family. Monomer.

The protein resides in the cell outer membrane. In terms of biological role, plays a critical role in the incorporation of lipoproteins in the outer membrane after they are released by the LolA protein. This is Outer-membrane lipoprotein LolB from Sodalis glossinidius (strain morsitans).